Reading from the N-terminus, the 238-residue chain is Enoyl-CoA delta isomerase 3 (238 aa).

This sequence belongs to the enoyl-CoA hydratase/isomerase family.

Its subcellular location is the cytoplasm. It is found in the nucleus. It catalyses the reaction a (3Z)-enoyl-CoA = a 4-saturated (2E)-enoyl-CoA. The enzyme catalyses a (3E)-enoyl-CoA = a 4-saturated (2E)-enoyl-CoA. Its pathway is lipid metabolism; fatty acid beta-oxidation. Functionally, able to isomerize both 3-cis and 3-trans double bonds into the 2-trans form in a range of enoyl-CoA species. Essential for the beta oxidation of unsaturated fatty acids. The polypeptide is Enoyl-CoA delta isomerase 3 (Arabidopsis thaliana (Mouse-ear cress)).